We begin with the raw amino-acid sequence, 267 residues long: MRLIPLKNDEQVAKWSAQHIVDRINAFNPTEDHPFVLGLPTGGTPLKTYRELIKLYQAGKVSFKHVVTFNMDEYVGLPKEHPQSYHSFMYNNFFNHVDIPEKNINILDGNTPDHDAECRRYEEKIKSYGKINLFMGGVGVDGHIAFNEPASSLSSRTRIKTLTPDTLIANSRFFNNDVSQVPKYALTIGVATLLDAEEVMLLITGHQKALALQACVEGAVNHLWTVSALQLHRHSIVVCDEPATQELKVKTVKYFTELEAYAIHSVI.

The active-site Proton acceptor; for enolization step is Asp72. Asp141 (for ring-opening step) is an active-site residue. His143 (proton acceptor; for ring-opening step) is an active-site residue. Glu148 serves as the catalytic For ring-opening step.

The protein belongs to the glucosamine/galactosamine-6-phosphate isomerase family. NagB subfamily. Homohexamer.

The catalysed reaction is alpha-D-glucosamine 6-phosphate + H2O = beta-D-fructose 6-phosphate + NH4(+). Its pathway is amino-sugar metabolism; N-acetylneuraminate degradation; D-fructose 6-phosphate from N-acetylneuraminate: step 5/5. With respect to regulation, allosterically activated by N-acetylglucosamine 6-phosphate (GlcNAc6P). Its function is as follows. Catalyzes the reversible isomerization-deamination of glucosamine 6-phosphate (GlcN6P) to form fructose 6-phosphate (Fru6P) and ammonium ion. The protein is Glucosamine-6-phosphate deaminase of Mannheimia succiniciproducens (strain KCTC 0769BP / MBEL55E).